The chain runs to 878 residues: Aminopeptidase M1-C (878 aa).

The tract at residues 102–209 (LGEGVLAMDF…MSTYLVAIVV (108 aa)) is required for membrane association. Residues glutamate 142 and 275–279 (GAMEN) contribute to the substrate site. Residue histidine 311 coordinates Zn(2+). Glutamate 312 (proton acceptor) is an active-site residue. Positions 315 and 334 each coordinate Zn(2+). The short motif at 726-727 (LL) is the Dileucine internalization motif element.

This sequence belongs to the peptidase M1 family. Homodimer. It depends on Zn(2+) as a cofactor.

The protein resides in the membrane. It localises to the microsome membrane. It is found in the cytoplasm. It catalyses the reaction Release of an N-terminal amino acid, Xaa-|-Yaa- from a peptide, amide or arylamide. Xaa is preferably Ala, but may be most amino acids including Pro (slow action). When a terminal hydrophobic residue is followed by a prolyl residue, the two may be released as an intact Xaa-Pro dipeptide.. The sequence is that of Aminopeptidase M1-C from Oryza sativa subsp. japonica (Rice).